We begin with the raw amino-acid sequence, 244 residues long: Claudin-12 (244 aa).

Over 1–10 (MGCRDVHAAT) the chain is Cytoplasmic. A helical membrane pass occupies residues 11-31 (VLSFLCGIASVAGLFAGTLLP). Topologically, residues 32–87 (NWRKLRLITFNRNEKNLTVYTGLWVKCARYDGGNDCLMYDAAWYSSVDQLDLRVLQ) are extracellular. A helical transmembrane segment spans residues 88–108 (FALPLSILIAMGALLLCLIGM). The Cytoplasmic portion of the chain corresponds to 109 to 135 (CNTAFRSSVPNIKLAKCLVNSAGCHLV). Residues 136 to 156 (AGLLFFLAGTVSLSPSIWVIF) form a helical membrane-spanning segment. The Extracellular portion of the chain corresponds to 157 to 174 (YNIHLNRKFEPVFAFDYA). A helical membrane pass occupies residues 175–195 (VYVTVASAGGLFMTALLLFIW). Topologically, residues 196–244 (YCACKSLPSPFWQPLYSHPPGMHTYSQPYSARSRLSAIEIDIPVVSHTT) are cytoplasmic. A phosphoserine mark is found at serine 228 and serine 231.

It belongs to the claudin family. In terms of assembly, interacts with OCLN.

It localises to the cell junction. Its subcellular location is the tight junction. The protein resides in the cell membrane. Its function is as follows. Plays a major role in tight junction-specific obliteration of the intercellular space, through calcium-independent cell-adhesion activity. In Bos taurus (Bovine), this protein is Claudin-12 (CLDN12).